The following is a 194-amino-acid chain: 21 kDa hemolysin (194 aa).

The signal sequence occupies residues 1 to 19; it reads MRTRSRSTVRPLWPPPSPA. 2 consecutive BON domains span residues 49–118 and 127–194; these read DDEV…RTGE and IDSW…NYVQ.

The protein localises to the periplasm. This Actinobacillus pleuropneumoniae (Haemophilus pleuropneumoniae) protein is 21 kDa hemolysin (hly).